Reading from the N-terminus, the 481-residue chain is Adenosylhomocysteinase (481 aa).

3 residues coordinate substrate: Thr65, Asp140, and Glu200. Position 201-203 (201-203) interacts with NAD(+); sequence TTT. Substrate-binding residues include Lys230 and Asp234. NAD(+) contacts are provided by residues Asn235, 264–269, Glu287, Asn322, 343–345, and Asn393; these read GYGDVG and IGH.

It belongs to the adenosylhomocysteinase family. NAD(+) serves as cofactor.

The protein localises to the cytoplasm. It carries out the reaction S-adenosyl-L-homocysteine + H2O = L-homocysteine + adenosine. It participates in amino-acid biosynthesis; L-homocysteine biosynthesis; L-homocysteine from S-adenosyl-L-homocysteine: step 1/1. Functionally, may play a key role in the regulation of the intracellular concentration of adenosylhomocysteine. This chain is Adenosylhomocysteinase, found in Polynucleobacter asymbioticus (strain DSM 18221 / CIP 109841 / QLW-P1DMWA-1) (Polynucleobacter necessarius subsp. asymbioticus).